A 533-amino-acid chain; its full sequence is Beta-xylosidase (533 aa).

D14 functions as the Proton acceptor in the catalytic mechanism. E186 functions as the Proton donor in the catalytic mechanism.

This sequence belongs to the glycosyl hydrolase 43 family. As to quaternary structure, homodimer.

Its subcellular location is the cell membrane. The catalysed reaction is Hydrolysis of (1-&gt;4)-beta-D-xylans, to remove successive D-xylose residues from the non-reducing termini.. This Bacillus subtilis (strain 168) protein is Beta-xylosidase (xynB).